Here is a 575-residue protein sequence, read N- to C-terminus: TOX high mobility group box family member 3 (575 aa).

Disordered regions lie at residues 189-258 and 516-575; these read LGGA…QKPV and QQLQ…VSIF. The segment covering 195 to 214 has biased composition (low complexity); that stretch reads SHTSPSPPASKSATPSPSSS. The span at 222–238 shows a compositional bias: basic and acidic residues; it reads DANRAIGEKRTAPDSGK. A compositionally biased stretch (basic residues) spans 239–249; the sequence is KPKTPKKKKKK. Positions 254–322 form a DNA-binding region, HMG box; the sequence is PQKPVSAYAL…EYLKALAAYR (69 aa). Positions 516–526 are enriched in low complexity; the sequence is QQLQHMQHQSQ. Polar residues predominate over residues 527 to 541; it reads PSPRQHSPVTSQITS. Low complexity predominate over residues 548 to 575; the sequence is SPQPASQQHQPQIQSQTQTQVLPQVSIF.

As to quaternary structure, homodimer. Interacts (via HGM box) with CITED1 (via C-terminus); the interaction increases estrogen-response element (ERE)-dependent transcription and protection against cell death. Interacts with CREB1 (phosphorylated form). Interacts with CREB1; the interaction is not depolarization dependent. Interacts with CREBBP (via C-terminus).

It is found in the nucleus. In terms of biological role, transcriptional coactivator of the p300/CBP-mediated transcription complex. Activates transactivation through cAMP response element (CRE) sites. Protects against cell death by inducing antiapoptotic and repressing pro-apoptotic transcripts. Stimulates transcription from the estrogen-responsive or BCL-2 promoters. Required for depolarization-induced transcription activation of the C-FOS promoter in neurons. Associates with chromatin to the estrogen-responsive C3 promoter region. In Mus musculus (Mouse), this protein is TOX high mobility group box family member 3 (Tox3).